Reading from the N-terminus, the 933-residue chain is Anoctamin-7 (933 aa).

Over 1-355 the chain is Cytoplasmic; sequence MRMAATAWAG…YFAWLGFYTG (355 aa). The disordered stretch occupies residues 43 to 101; the sequence is ETSSGSHCARSRMLRRRAQEEDSTVLIDVSPPEAEKRGSYGSTAHASEPGGQQAAACRA. Residues 356–376 traverse the membrane as a helical segment; the sequence is WLLPAAVVGTLVFLVGCFLVF. Over 377 to 420 the chain is Extracellular; that stretch reads SDIPTQELCGSKDSFEMCPLCLDCPFWLLSSACALAQAGRLFDH. The chain crosses the membrane as a helical span at residues 421–441; sequence GGTVFFSLFMALWAVLLLEYW. At 442–499 the chain is on the cytoplasmic side; it reads KRKSATLAYRWDCSDYEDTEERPRPQFAASAPMTAPNPITGEDEPYFPERSRARRMLA. Residues 500–520 form a helical membrane-spanning segment; the sequence is GSVVIVVMVAVVVMCLVSIIL. At 521-550 the chain is on the extracellular side; it reads YRAIMAIVVSRSGNTLLAAWASRIASLTGS. Residues 551 to 571 form a helical membrane-spanning segment; the sequence is VVNLVFILILSKIYVSLAHVL. Residues 572 to 588 are Cytoplasmic-facing; that stretch reads TRWEMHRTQTKFEDAFT. Residues 589–609 traverse the membrane as a helical segment; it reads LKVFIFQFVNFYSSPVYIAFF. At 610-714 the chain is on the extracellular side; it reads KGRFVGYPGN…FDEYLEMVLQ (105 aa). A helical membrane pass occupies residues 715–735; sequence FGFVTIFVAACPLAPLFALLN. The Cytoplasmic portion of the chain corresponds to 736–763; it reads NWVEIRLDARKFVCEYRRPVAERAQDIG. A helical membrane pass occupies residues 764 to 784; sequence IWFHILAGLTHLAVISNAFLL. Topologically, residues 785–843 are extracellular; the sequence is AFSSDFLPRAYYRWTRAHDLRGFLNFTLARAPSSFAAAHNRTCRYRAFRDDDGHYSQTY. N-linked (GlcNAc...) asparagine glycosylation is found at N809 and N824. Residues 844–864 form a helical membrane-spanning segment; sequence WNLLAIRLAFVIVFEHVVFSV. Topologically, residues 865–933 are cytoplasmic; it reads GRLLDLLVPD…TVPKASQLQQ (69 aa). Positions 902–933 are disordered; sequence GTNGTKDEQPEGSELSSHWTPFTVPKASQLQQ. Residues 915–933 show a composition bias toward polar residues; sequence ELSSHWTPFTVPKASQLQQ.

This sequence belongs to the anoctamin family. In terms of tissue distribution, specifically expressed in epithelial cells of the prostate (at protein level).

It localises to the cell membrane. Its subcellular location is the cell junction. It is found in the endoplasmic reticulum. The protein resides in the cytoplasm. The protein localises to the cytosol. It catalyses the reaction a 1,2-diacyl-sn-glycero-3-phospho-L-serine(in) = a 1,2-diacyl-sn-glycero-3-phospho-L-serine(out). The catalysed reaction is a beta-D-galactosyl-(1&lt;-&gt;1')-N-acylsphing-4-enine(out) = a beta-D-galactosyl-(1&lt;-&gt;1')-N-acylsphing-4-enine(in). It carries out the reaction a 1,2-diacyl-sn-glycero-3-phosphocholine(in) = a 1,2-diacyl-sn-glycero-3-phosphocholine(out). In terms of biological role, has calcium-dependent phospholipid scramblase activity; scrambles phosphatidylserine, phosphatidylcholine and galactosylceramide. Does not exhibit calcium-activated chloride channel (CaCC) activity. May play a role in cell-cell interactions. In Homo sapiens (Human), this protein is Anoctamin-7 (ANO7).